Here is a 424-residue protein sequence, read N- to C-terminus: L-glutamine:2-deoxy-scyllo-inosose aminotransferase (424 aa).

The residue at position 202 (lysine 202) is an N6-(pyridoxal phosphate)lysine.

Belongs to the DegT/DnrJ/EryC1 family. L-glutamine:2-deoxy-scyllo-inosose/scyllo-inosose aminotransferase subfamily. It depends on pyridoxal 5'-phosphate as a cofactor.

It catalyses the reaction 2-deoxy-L-scyllo-inosose + L-glutamine = 2-deoxy-scyllo-inosamine + 2-oxoglutaramate. The catalysed reaction is 3-amino-2,3-dideoxy-scyllo-inosose + L-glutamine = 2-deoxystreptamine + 2-oxoglutaramate. It functions in the pathway metabolic intermediate biosynthesis; 2-deoxystreptamine biosynthesis; 2-deoxystreptamine from D-glucose 6-phosphate: step 2/4. It participates in metabolic intermediate biosynthesis; 2-deoxystreptamine biosynthesis; 2-deoxystreptamine from D-glucose 6-phosphate: step 4/4. The protein operates within antibiotic biosynthesis; neomycin biosynthesis. Functionally, catalyzes the PLP-dependent transamination of 2-deoxy-scyllo-inosose (2-DOI) to form 2-deoxy-scyllo-inosamine (2-DOIA) using L-glutamine as the amino donor. Also catalyzes the transamination of 3-amino-2,3-dideoxy-scyllo-inosose (keto-2-DOIA) into 2-deoxystreptamine (2-DOS). The protein is L-glutamine:2-deoxy-scyllo-inosose aminotransferase (neoB) of Streptomyces fradiae (Streptomyces roseoflavus).